Here is a 312-residue protein sequence, read N- to C-terminus: HTH-type transcriptional regulator TdcA (312 aa).

An HTH lysR-type domain is found at 7–64; the sequence is PKTQHLVVFQEVIRSGSIGSAAKELGLTQPAVSKIINDIEDYFGVELVVRKNTGVTLT. Positions 24–43 form a DNA-binding region, H-T-H motif; the sequence is IGSAAKELGLTQPAVSKIIN.

It belongs to the LysR transcriptional regulatory family.

Its pathway is amino-acid degradation; L-threonine degradation via propanoate pathway [regulation]. Transcriptional activator for the tdcABCDE operon. The sequence is that of HTH-type transcriptional regulator TdcA (tdcA) from Escherichia coli O157:H7.